Here is a 104-residue protein sequence, read N- to C-terminus: Large ribosomal subunit protein uL24 (104 aa).

Belongs to the universal ribosomal protein uL24 family. Part of the 50S ribosomal subunit.

One of two assembly initiator proteins, it binds directly to the 5'-end of the 23S rRNA, where it nucleates assembly of the 50S subunit. In terms of biological role, one of the proteins that surrounds the polypeptide exit tunnel on the outside of the subunit. This chain is Large ribosomal subunit protein uL24, found in Treponema denticola (strain ATCC 35405 / DSM 14222 / CIP 103919 / JCM 8153 / KCTC 15104).